A 326-amino-acid polypeptide reads, in one-letter code: Vitamin B12 import system permease protein BtuC (326 aa).

The next 9 membrane-spanning stretches (helical) occupy residues 15–35 (WLLC…CAGE), 61–81 (LAVL…QALF), 88–108 (PGLL…VLLG), 112–132 (LPNW…TLIL), 146–166 (LLAG…AIYF), 184–204 (GGVD…LLWI), 240–260 (GWMV…GLVI), 274–294 (VLLP…DIVA), and 302–322 (ELPI…WLLL).

This sequence belongs to the binding-protein-dependent transport system permease family. FecCD subfamily. The complex is composed of two ATP-binding proteins (BtuD), two transmembrane proteins (BtuC) and a solute-binding protein (BtuF).

The protein resides in the cell inner membrane. Part of the ABC transporter complex BtuCDF involved in vitamin B12 import. Involved in the translocation of the substrate across the membrane. This chain is Vitamin B12 import system permease protein BtuC, found in Escherichia coli O7:K1 (strain IAI39 / ExPEC).